Here is a 467-residue protein sequence, read N- to C-terminus: Matrix metalloproteinase-18 (467 aa).

Residues 1 to 17 (MNSLLLKLLLCVAITAA) form the signal peptide. Residues 18 to 99 (FPADKQDEPP…PRCGVYDVGQ (82 aa)) constitute a propeptide that is removed on maturation. Residues 90-97 (PRCGVYDV) carry the Cysteine switch motif. Residues cysteine 92 and histidine 218 each coordinate Zn(2+). Glutamate 219 is an active-site residue. Residues histidine 222 and histidine 228 each contribute to the Zn(2+) site. Hemopexin repeat units follow at residues 277 to 326 (PSRC…WPSL), 327 to 373 (PTNI…GFPK), 375 to 423 (VKRI…FPGI), and 424 to 467 (PDKI…WLGC). A disulfide bridge links cysteine 280 with cysteine 467.

Belongs to the peptidase M10A family. Zn(2+) serves as cofactor. It depends on Ca(2+) as a cofactor. Expressed only transiently in whole animal, at time when tadpole feeding begins.

Its subcellular location is the secreted. It localises to the extracellular space. The protein resides in the extracellular matrix. With respect to regulation, up-regulated in the tail by thyroid hormone. Its function is as follows. Cleaves collagen type I. May play a role in larval tissue degeneration and adult organogenesis during amphibian metamorphosis. May be involved in tail resorption. This chain is Matrix metalloproteinase-18 (mmp18), found in Xenopus laevis (African clawed frog).